Reading from the N-terminus, the 256-residue chain is Imidazole glycerol phosphate synthase subunit HisF (256 aa).

Residues Asp-12 and Asp-131 contribute to the active site.

The protein belongs to the HisA/HisF family. As to quaternary structure, heterodimer of HisH and HisF.

The protein localises to the cytoplasm. The catalysed reaction is 5-[(5-phospho-1-deoxy-D-ribulos-1-ylimino)methylamino]-1-(5-phospho-beta-D-ribosyl)imidazole-4-carboxamide + L-glutamine = D-erythro-1-(imidazol-4-yl)glycerol 3-phosphate + 5-amino-1-(5-phospho-beta-D-ribosyl)imidazole-4-carboxamide + L-glutamate + H(+). It functions in the pathway amino-acid biosynthesis; L-histidine biosynthesis; L-histidine from 5-phospho-alpha-D-ribose 1-diphosphate: step 5/9. Its function is as follows. IGPS catalyzes the conversion of PRFAR and glutamine to IGP, AICAR and glutamate. The HisF subunit catalyzes the cyclization activity that produces IGP and AICAR from PRFAR using the ammonia provided by the HisH subunit. The chain is Imidazole glycerol phosphate synthase subunit HisF from Micrococcus luteus (strain ATCC 4698 / DSM 20030 / JCM 1464 / CCM 169 / CCUG 5858 / IAM 1056 / NBRC 3333 / NCIMB 9278 / NCTC 2665 / VKM Ac-2230) (Micrococcus lysodeikticus).